We begin with the raw amino-acid sequence, 790 residues long: uncharacterized protein (790 aa).

One can recognise a TBDR plug domain in the interval 37–172 (APVPVPVNGN…NGGVIDAKIK (136 aa)). Residues 178 to 790 (DSKVKLGYRT…TFWLDVSMKF (613 aa)) enclose the TBDR beta-barrel domain.

The protein belongs to the TonB-dependent receptor family.

Its subcellular location is the cell outer membrane. This is an uncharacterized protein from Escherichia coli (strain K12).